The following is a 135-amino-acid chain: AAVVALWGKIGKSADVIGNDALSRMIVVYPETKTYFSHWPDLAPGSPHIKAHGKKVMGGIALAVTKIDDLKAGLFDLSEQHAYKLRVDPSNFKILNHCILVVISIMFPKEFTPEAHVSLDKFLSGVALALAERYK.

The Globin domain occupies 1 to 135; that stretch reads AAVVALWGKI…VALALAERYK (135 aa). O2 is bound at residue His52. Position 81 (His81) interacts with heme b.

It belongs to the globin family. Hb1 is a heterotetramer of two alpha chains and two beta-1 chains. Hb2 is a heterotetramer of two alpha chains and two beta-2 chains. In terms of processing, the N-terminus is blocked. In terms of tissue distribution, red blood cells.

Involved in oxygen transport from gills to the various peripheral tissues. This is Hemoglobin subunit alpha from Dissostichus eleginoides (Patagonian toothfish).